A 608-amino-acid polypeptide reads, in one-letter code: MAAPGLPQPGSLSTLAGYPSSTYSSQNSPFFPSADRGGRMTLEEIKRDFTKHKLECPDTMWREPQPEQVQGLYSFAIESIFGLTVNDVRIEEVTGDVRSCLPSIDSLQFLSQDGRLHAKAIGNLRFIRLCQRLNRVLGLPEFSRETFASPTASGVQRFASAVCMLLRLRESLCRQFESQIQQRASLQQSLQKLSQNAQLVEQELLRFRAERQTQQPLAQRQKQQQSELEEELRQRHSELGALMEEFKERQAVHGRLELELGDLVLELMNLKQEREELHDQVVHSPEKLMERRDELRVQQKHLDAQLQELENLAASQQKLLLAFAKAVKKAKKAMEILSAHRDQVLAPHLGFRSDMRTREKLFRELGEQKEQLSKAVQDLQAEREELARQLEDQERKKDEEETELRGHLARAKREVEERKKALADQQDMTAAFLREAEKLEEKLAEQKQRHKLLVDAIEEEIQKVYAAFLTYVSQMQFIRSQMPLSLDLSQSASFLAEHSEKTHRGSPLACEREENDDFLASLLAESSPSSLGEEKENLPQSRPTAAADAERRLADFSPEKGRKRLSCLDEETEEEARMHERERESDRLFPAAREPREDGDFPMYGHAE.

The interval 121–125 is required for nuclear localization and function; the sequence is IGNLR. Coiled-coil stretches lie at residues 176-319 and 358-460; these read FESQ…QQKL and REKL…IEEE.

This sequence belongs to the NUF2 family.

It localises to the chromosome. It is found in the centromere. The protein resides in the kinetochore. In terms of biological role, required for anchoring centrosomal cores to the nuclear periphery. Plays a role in chromosome segregation but is dispensable for centromere clustering. This is Kinetochore protein NUF2 from Toxoplasma gondii (strain ATCC 50611 / Me49).